A 301-amino-acid polypeptide reads, in one-letter code: tRNA dimethylallyltransferase (301 aa).

8 to 15 (GATGTGKS) provides a ligand contact to ATP. Residue 10 to 15 (TGTGKS) coordinates substrate. Positions 33–36 (DSMQ) are interaction with substrate tRNA.

This sequence belongs to the IPP transferase family. As to quaternary structure, monomer. It depends on Mg(2+) as a cofactor.

The enzyme catalyses adenosine(37) in tRNA + dimethylallyl diphosphate = N(6)-dimethylallyladenosine(37) in tRNA + diphosphate. In terms of biological role, catalyzes the transfer of a dimethylallyl group onto the adenine at position 37 in tRNAs that read codons beginning with uridine, leading to the formation of N6-(dimethylallyl)adenosine (i(6)A). The chain is tRNA dimethylallyltransferase from Tropheryma whipplei (strain Twist) (Whipple's bacillus).